A 315-amino-acid chain; its full sequence is Putative protein phosphatase 2C 24 (315 aa).

The region spanning 71–314 (ALRMEAASCF…DDITVVVAYI (244 aa)) is the PPM-type phosphatase domain. Mn(2+) contacts are provided by Asp-102, Gly-103, Asp-238, and Asp-305.

This sequence belongs to the PP2C family. It depends on Mg(2+) as a cofactor. Requires Mn(2+) as cofactor.

The enzyme catalyses O-phospho-L-seryl-[protein] + H2O = L-seryl-[protein] + phosphate. It catalyses the reaction O-phospho-L-threonyl-[protein] + H2O = L-threonyl-[protein] + phosphate. In Oryza sativa subsp. japonica (Rice), this protein is Putative protein phosphatase 2C 24.